Here is a 318-residue protein sequence, read N- to C-terminus: ADP-ribosyl cyclase/cyclic ADP-ribose hydrolase 2 (318 aa).

An N-terminal signal peptide occupies residues 1 to 32; the sequence is MAAQGCAASRLLQLLLQLLLLLLLLAAGGARA. Cystine bridges form between C51–C67, C83–C163, and C144–C157. N-linked (GlcNAc...) asparagine glycosylation is found at N66 and N95. W109 is a binding site for NAD(+). W109 contributes to the nicotinamide binding site. N148 is a glycosylation site (N-linked (GlcNAc...) asparagine). W172 serves as a coordination point for NAD(+). An N-linked (GlcNAc...) asparagine glycan is attached at N192. E210 contacts NAD(+). 2 disulfides stabilise this stretch: C238/C259 and C271/C280. A293 is lipidated: GPI-anchor amidated alanine. Residues 294 to 318 constitute a propeptide, removed in mature form; it reads PSLYTEQRAGLIIPLFLVLASRTQL.

The protein belongs to the ADP-ribosyl cyclase family. In terms of assembly, homodimer. As to expression, expressed in various tissues including placenta, lung, liver and kidney.

The protein localises to the cell membrane. The enzyme catalyses NAD(+) + H2O = ADP-D-ribose + nicotinamide + H(+). It catalyses the reaction NAD(+) = cyclic ADP-beta-D-ribose + nicotinamide + H(+). It carries out the reaction cyclic ADP-beta-D-ribose + H2O = ADP-D-ribose. With respect to regulation, ADP-ribosyl cyclase and cADPR hydrolase activities are both activated by Zn(2+) or Mn(2+), and inhibited by Cu(2+), while Mg(2+) and Ca(2+) do not have any significant influence. Functionally, catalyzes both the synthesis of cyclic ADP-beta-D-ribose (cADPR) from NAD(+), and its hydrolysis to ADP-D-ribose (ADPR). Cyclic ADPR is known to serve as an endogenous second messenger that elicits calcium release from intracellular stores, and thus regulates the mobilization of intracellular calcium. May be involved in pre-B-cell growth. This chain is ADP-ribosyl cyclase/cyclic ADP-ribose hydrolase 2 (BST1), found in Homo sapiens (Human).